The following is a 142-amino-acid chain: Ribosomal RNA large subunit methyltransferase H (142 aa).

G89 is an S-adenosyl-L-methionine binding site.

The protein belongs to the RNA methyltransferase RlmH family. Homodimer.

Its subcellular location is the cytoplasm. The enzyme catalyses pseudouridine(1915) in 23S rRNA + S-adenosyl-L-methionine = N(3)-methylpseudouridine(1915) in 23S rRNA + S-adenosyl-L-homocysteine + H(+). Its function is as follows. Specifically methylates the pseudouridine at position 1915 (m3Psi1915) in 23S rRNA. This Zymomonas mobilis subsp. mobilis (strain ATCC 31821 / ZM4 / CP4) protein is Ribosomal RNA large subunit methyltransferase H.